The sequence spans 466 residues: NADPH:adrenodoxin oxidoreductase, mitochondrial (466 aa).

FAD contacts are provided by Ala40, Glu61, Leu69, and Leu105. NADP(+)-binding positions include 176–179 (QGNV), 220–221 (RR), and Glu232. Residues Trp379 and 386–388 (GVI) contribute to the FAD site. Gly386 contacts NADP(+).

Belongs to the ferredoxin--NADP reductase type 1 family. FAD is required as a cofactor. In terms of tissue distribution, expressed predominantly in prothoracic gland of the larval ring gland and nurse cells of the adult ovary. Low expression is all adult tissues examined.

The protein resides in the mitochondrion inner membrane. It catalyses the reaction 2 reduced [adrenodoxin] + NADP(+) + H(+) = 2 oxidized [adrenodoxin] + NADPH. It functions in the pathway steroid metabolism; cholesterol metabolism. Required for synthesis of steroid hormones, for olfactory sensory behavior and completion of the second larval molt (a steroid mediated developmental transition) and pupariation. In Drosophila melanogaster (Fruit fly), this protein is NADPH:adrenodoxin oxidoreductase, mitochondrial (dare).